Consider the following 354-residue polypeptide: Protein-arginine kinase (354 aa).

The Phosphagen kinase C-terminal domain occupies 24–254; the sequence is IVLSSRIRLA…QQIIQQEKMA (231 aa). ATP contacts are provided by residues 27 to 31, His-92, Arg-125, 176 to 180, and 207 to 212; these read SSRIR, RASVM, and RGIYGE. An RDXXRA motif of the pArg binding pocket involved in allosteric regulation motif is present at residues 337-342; it reads RDYRRA.

This sequence belongs to the ATP:guanido phosphotransferase family.

It carries out the reaction L-arginyl-[protein] + ATP = N(omega)-phospho-L-arginyl-[protein] + ADP + H(+). With respect to regulation, appears to be allosterically activated by the binding of pArg-containing polypeptides to the pArg-binding pocket localized in the C-terminal domain of McsB. Catalyzes the specific phosphorylation of arginine residues in a large number of proteins. Is part of the bacterial stress response system. Protein arginine phosphorylation has a physiologically important role and is involved in the regulation of many critical cellular processes, such as protein homeostasis, motility, competence, and stringent and stress responses, by regulating gene expression and protein activity. The protein is Protein-arginine kinase of Bacillus cereus (strain ATCC 10987 / NRS 248).